A 682-amino-acid chain; its full sequence is Zinc finger protein 16 (682 aa).

Positions 1–10 (MPSLRTRREE) are enriched in basic and acidic residues. Residues 1–38 (MPSLRTRREEAEMELSAPGPSPWTPAAQARVSDAPAVT) are disordered. Residues 62–210 (YQQPDCDTRT…GVPTAESPLI (149 aa)) form a necessary for transcription activation region. The segment at 209–231 (LICNECGKTFRGNPDLIQRQIVH) adopts a C2H2-type 1; degenerate zinc-finger fold. The segment at 237-259 (FMCDDCGKTFSQNSVLKNRHRSH) adopts a C2H2-type 2; degenerate zinc-finger fold. Lys253 participates in a covalent cross-link: Glycyl lysine isopeptide (Lys-Gly) (interchain with G-Cter in SUMO2). 8 consecutive C2H2-type zinc fingers follow at residues 265–287 (YQCSECGKAFRGHSDFSRHQSHH), 293–315 (YTCTECGKAFSQNSSLKKHQKSH), 321–343 (YECNECGKAFRRSSNLIQHQRIH), 349–371 (YVCSECGKAFRRSSNLIKHHRTH), 377–399 (FECGECGKAFSQSAHLRKHQRVH), 405–427 (YECNDCGKPFSRVSNLIKHHRVH), 433–455 (YKCSDCGKXFSQSSSLIQHRRIH), and 461–483 (HVCNVCGKAFSYSSVLRKHQIIH). Required for nuclear localization stretches follow at residues 268–393 (SECG…AHLR) and 341–373 (RIHSGEKPYVCSECGKAFRRSSNLIKHHRTHTG). The tract at residues 473 to 503 (SSVLRKHQIIHTGEKPYRCSVCGKAFSHSSA) is required for nuclear localization. Lys487 is subject to N6-acetyllysine. C2H2-type zinc fingers lie at residues 489-511 (YRCSVCGKAFSHSSALIQHQGVH), 517-539 (YACHECGKTFGRSSNLILHQRVH), 545-567 (YECTECGKTFSQSSTLIQHQRIH), 573-595 (HECNQCGKAFNRSSNLIHHQKVH), 601-623 (YTCVECGKGFSQSSHLIQHQIIH), 629-651 (YKCSECGKAFSQRSVLIQHQRIH), and 657-679 (YDCAACGKAFSQRSKLIKHQLIH).

Belongs to the krueppel C2H2-type zinc-finger protein family. As to quaternary structure, interacts with INCA1; the interaction inhibits INCA1 activity and induces the cell cycle process.

The protein localises to the nucleus. Functionally, acts as a transcriptional activator. Promotes cell proliferation by facilitating the cell cycle phase transition from the S to G2/M phase. Involved in both the hemin- and phorbol myristate acetate (PMA)-induced erythroid and megakaryocytic differentiation, respectively. Also plays a role as an inhibitor of cell apoptosis. This chain is Zinc finger protein 16 (ZNF16), found in Pan troglodytes (Chimpanzee).